A 544-amino-acid polypeptide reads, in one-letter code: Protein RDR1 (544 aa).

Residues 14-40 (CETCRELKRKCDGNQPCGACVRFEYDC) constitute a DNA-binding region (zn(2)-C6 fungal-type). The segment at 50–71 (KRRKTVEQDKEAPLPSPPVHVD) is disordered.

Its subcellular location is the nucleus. May act as a transcriptional repressor of multidrug resistance genes. The protein is Protein RDR1 (RDR1) of Gibberella zeae (strain ATCC MYA-4620 / CBS 123657 / FGSC 9075 / NRRL 31084 / PH-1) (Wheat head blight fungus).